The chain runs to 439 residues: Adenylosuccinate synthetase (439 aa).

GTP is bound by residues 25-31 (GDEGKGK), 53-55 (GHT), and lysine 62. The active-site Proton acceptor is the aspartate 26. Mg(2+) contacts are provided by aspartate 26 and glycine 53. IMP is bound by residues 26-29 (DEGK) and 51-54 (NAGH). The Proton donor role is filled by histidine 54. The IMP site is built by threonine 141, arginine 155, asparagine 232, and threonine 247. Threonine 307 contributes to the GTP binding site. Position 307 to 313 (307 to 313 (TTTNRPR)) interacts with substrate. Arginine 311 provides a ligand contact to IMP. GTP is bound by residues arginine 313, 339-341 (KLD), and 425-427 (GVG).

It belongs to the adenylosuccinate synthetase family. In terms of assembly, homodimer. The cofactor is Mg(2+).

The protein localises to the cytoplasm. It carries out the reaction IMP + L-aspartate + GTP = N(6)-(1,2-dicarboxyethyl)-AMP + GDP + phosphate + 2 H(+). It participates in purine metabolism; AMP biosynthesis via de novo pathway; AMP from IMP: step 1/2. In terms of biological role, plays an important role in the salvage pathway for purine nucleotide biosynthesis. Catalyzes the first commited step in the biosynthesis of AMP from IMP. In Plasmodium chabaudi chabaudi, this protein is Adenylosuccinate synthetase.